The following is a 575-amino-acid chain: Proline--tRNA ligase (575 aa).

This sequence belongs to the class-II aminoacyl-tRNA synthetase family. ProS type 1 subfamily. In terms of assembly, homodimer.

The protein localises to the cytoplasm. It catalyses the reaction tRNA(Pro) + L-proline + ATP = L-prolyl-tRNA(Pro) + AMP + diphosphate. Catalyzes the attachment of proline to tRNA(Pro) in a two-step reaction: proline is first activated by ATP to form Pro-AMP and then transferred to the acceptor end of tRNA(Pro). As ProRS can inadvertently accommodate and process non-cognate amino acids such as alanine and cysteine, to avoid such errors it has two additional distinct editing activities against alanine. One activity is designated as 'pretransfer' editing and involves the tRNA(Pro)-independent hydrolysis of activated Ala-AMP. The other activity is designated 'posttransfer' editing and involves deacylation of mischarged Ala-tRNA(Pro). The misacylated Cys-tRNA(Pro) is not edited by ProRS. The chain is Proline--tRNA ligase from Solidesulfovibrio magneticus (strain ATCC 700980 / DSM 13731 / RS-1) (Desulfovibrio magneticus).